The chain runs to 280 residues: 3,2-trans-enoyl-CoA isomerase (280 aa).

Substrate contacts are provided by residues 68–72 and L126; that span reads SGADF. E158 serves as the catalytic Proton donor/acceptor. A Microbody targeting signal motif is present at residues 278 to 280; it reads HRL.

This sequence belongs to the enoyl-CoA hydratase/isomerase family. As to quaternary structure, homohexamer, dimer of trimers. Interacts with DCI1.

The protein localises to the peroxisome. It catalyses the reaction a (3Z)-enoyl-CoA = a 4-saturated (2E)-enoyl-CoA. The catalysed reaction is a (3E)-enoyl-CoA = a 4-saturated (2E)-enoyl-CoA. The protein operates within lipid metabolism; fatty acid beta-oxidation. Functionally, essential for the beta oxidation of unsaturated fatty acids. This is 3,2-trans-enoyl-CoA isomerase (ECI1) from Saccharomyces cerevisiae (strain ATCC 204508 / S288c) (Baker's yeast).